The sequence spans 880 residues: Translation initiation factor IF-2 (880 aa).

The tract at residues 1–251 (MVDTKNPGDK…PTAKPAPAKQ (251 aa)) is disordered. Residues 58-79 (PADAPAAPAPVAAAKPAPVRAP) show a composition bias toward low complexity. Basic and acidic residues predominate over residues 115 to 183 (ARIRDEEERK…KRFGEEEAKK (69 aa)). Low complexity-rich tracts occupy residues 184 to 215 (AAAA…VAAD) and 233 to 250 (AARP…APAK). Residues 376–547 (PRSPVVTVMG…ALQAELLDLK (172 aa)) form the tr-type G domain. Residues 385-392 (GHVDHGKT) form a G1 region. 385–392 (GHVDHGKT) provides a ligand contact to GTP. The interval 410 to 414 (GITQH) is G2. Positions 433–436 (DTPG) are G3. Residues 433 to 437 (DTPGH) and 487 to 490 (NKID) each bind GTP. The interval 487–490 (NKID) is G4. A G5 region spans residues 523–525 (SAK).

Belongs to the TRAFAC class translation factor GTPase superfamily. Classic translation factor GTPase family. IF-2 subfamily.

The protein localises to the cytoplasm. Its function is as follows. One of the essential components for the initiation of protein synthesis. Protects formylmethionyl-tRNA from spontaneous hydrolysis and promotes its binding to the 30S ribosomal subunits. Also involved in the hydrolysis of GTP during the formation of the 70S ribosomal complex. This is Translation initiation factor IF-2 from Rhodopseudomonas palustris (strain BisB18).